The sequence spans 183 residues: Large ribosomal subunit protein bL32m (183 aa).

Residues 1 to 71 constitute a mitochondrion transit peptide; sequence MNSLIFGKQL…DFFSNNGILL (71 aa). Zn(2+)-binding residues include Cys104, Cys107, Cys117, and Cys120.

The protein belongs to the bacterial ribosomal protein bL32 family. In terms of assembly, component of the mitochondrial large ribosomal subunit (mt-LSU). Mature yeast 74S mitochondrial ribosomes consist of a small (37S) and a large (54S) subunit. The 37S small subunit contains a 15S ribosomal RNA (15S mt-rRNA) and 34 different proteins. The 54S large subunit contains a 21S rRNA (21S mt-rRNA) and 46 different proteins. bL32m has a zinc binding site. In terms of processing, MRPL32 precursor is processed by the m-AAA protease (composed of YTA12/RCA1 and YTA10/AFG3), which cleaves the N-terminal transit peptide. Cleavage by the m-AAA protease takes place prior to assembly into the large subunit, an essential step for mitochondrial ribosome (mitoribosome) assembly. Proper processing by the m-AAA protease is dependent on the zinc-binding region within the tightly folded C-terminal domain of MRPL32: zinc-dependent folding halts degradation initiated from the N-terminus and triggers the release of mature MRPL32.

It is found in the mitochondrion. Functionally, component of the mitochondrial ribosome (mitoribosome), a dedicated translation machinery responsible for the synthesis of mitochondrial genome-encoded proteins, including at least some of the essential transmembrane subunits of the mitochondrial respiratory chain. The mitoribosomes are attached to the mitochondrial inner membrane and translation products are cotranslationally integrated into the membrane. The chain is Large ribosomal subunit protein bL32m from Saccharomyces cerevisiae (strain ATCC 204508 / S288c) (Baker's yeast).